The sequence spans 166 residues: NADPH-dependent 7-cyano-7-deazaguanine reductase (166 aa).

Cysteine 57 (thioimide intermediate) is an active-site residue. Catalysis depends on aspartate 64, which acts as the Proton donor. Substrate-binding positions include 79-81 (VES) and 98-99 (HE).

This sequence belongs to the GTP cyclohydrolase I family. QueF type 1 subfamily.

The protein localises to the cytoplasm. The enzyme catalyses 7-aminomethyl-7-carbaguanine + 2 NADP(+) = 7-cyano-7-deazaguanine + 2 NADPH + 3 H(+). It functions in the pathway tRNA modification; tRNA-queuosine biosynthesis. Catalyzes the NADPH-dependent reduction of 7-cyano-7-deazaguanine (preQ0) to 7-aminomethyl-7-deazaguanine (preQ1). The sequence is that of NADPH-dependent 7-cyano-7-deazaguanine reductase from Staphylococcus saprophyticus subsp. saprophyticus (strain ATCC 15305 / DSM 20229 / NCIMB 8711 / NCTC 7292 / S-41).